The sequence spans 335 residues: MGNVSSAVKHCLSYETFLRDYPWLPRLLWEEKCSELPKLPVYVKIVEVGPRDGLQNEKEIVPTEVKIQLIDLLSQTGLPVIEATSFVSSKWVAQMADHTAVLKGIKRSPDVRYPVLTPNIQGFQAAVAAGANEVAVFGSASETFSRKNINCSIEESLQRFEQVVSAAKQEGIPVRGYVSCALGCPYEGQVKPSQVTKVAKRLFELGCYEVSLGDTIGVGTAGSMAEMLSDVLTEVPAGALAVHCHDTYGQALPNILIALQMGVSVVDASVAGLGGCPFAKGASGNVSTEDLLYMLHGLGIETGVDLLKVMEAGDFICKALNRKTNSKVSQATRNN.

G2 carries N-myristoyl glycine lipidation. In terms of domain architecture, Pyruvate carboxyltransferase spans 43-310 (VKIVEVGPRD…ETGVDLLKVM (268 aa)). Position 51 (R51) interacts with substrate. An a divalent metal cation-binding site is contributed by D52. N6-acetyllysine is present on K58. The a divalent metal cation site is built by H243 and H245. The active site involves C276. Position 285 (N285) interacts with a divalent metal cation.

This sequence belongs to the HMG-CoA lyase family. The cofactor is a divalent metal cation.

It is found in the cytoplasm. The protein localises to the cytosol. It localises to the endoplasmic reticulum membrane. It carries out the reaction (3S)-3-hydroxy-3-methylglutaryl-CoA = acetoacetate + acetyl-CoA. Its pathway is metabolic intermediate metabolism; (S)-3-hydroxy-3-methylglutaryl-CoA degradation; acetoacetate from (S)-3-hydroxy-3-methylglutaryl-CoA: step 1/1. Its function is as follows. Non-mitochondrial 3-hydroxy-3-methylglutaryl-CoA lyase that catalyzes a cation-dependent cleavage of (S)-3-hydroxy-3-methylglutaryl-CoA into acetyl-CoA and acetoacetate, a key step in ketogenesis, the products of which support energy production in nonhepatic animal tissues. The chain is 3-hydroxy-3-methylglutaryl-CoA lyase, cytoplasmic (hmgcll1) from Danio rerio (Zebrafish).